The primary structure comprises 183 residues: Regulatory protein RecX (183 aa).

A compositionally biased stretch (polar residues) spans 1–12; that stretch reads MTSFPHPSTSES. A disordered region spans residues 1-26; it reads MTSFPHPSTSESGPDPDSEPNREEQA.

Belongs to the RecX family.

The protein localises to the cytoplasm. Functionally, modulates RecA activity. The sequence is that of Regulatory protein RecX from Mycobacterium sp. (strain KMS).